A 131-amino-acid polypeptide reads, in one-letter code: Small ribosomal subunit protein uS11 (131 aa).

Belongs to the universal ribosomal protein uS11 family. Part of the 30S ribosomal subunit. Interacts with proteins S7 and S18. Binds to IF-3.

Located on the platform of the 30S subunit, it bridges several disparate RNA helices of the 16S rRNA. Forms part of the Shine-Dalgarno cleft in the 70S ribosome. The protein is Small ribosomal subunit protein uS11 of Helicobacter acinonychis (strain Sheeba).